Here is a 398-residue protein sequence, read N- to C-terminus: Bifunctional enzyme IspD/IspF (398 aa).

The segment at 1–234 (MSNSKRTAAI…SRLGALLGDI (234 aa)) is 2-C-methyl-D-erythritol 4-phosphate cytidylyltransferase. Positions 235-398 (RTGTGYDVHA…LPWGTNGLAD (164 aa)) are 2-C-methyl-D-erythritol 2,4-cyclodiphosphate synthase. Asp241 and His243 together coordinate a divalent metal cation. 4-CDP-2-C-methyl-D-erythritol 2-phosphate contacts are provided by residues 241 to 243 (DVH) and 267 to 268 (HS). His275 contributes to the a divalent metal cation binding site. 4-CDP-2-C-methyl-D-erythritol 2-phosphate-binding positions include 289–291 (DIG), 365–368 (TTSE), Phe372, and Arg375.

The protein in the N-terminal section; belongs to the IspD/TarI cytidylyltransferase family. IspD subfamily. In the C-terminal section; belongs to the IspF family. The cofactor is a divalent metal cation.

The enzyme catalyses 2-C-methyl-D-erythritol 4-phosphate + CTP + H(+) = 4-CDP-2-C-methyl-D-erythritol + diphosphate. It carries out the reaction 4-CDP-2-C-methyl-D-erythritol 2-phosphate = 2-C-methyl-D-erythritol 2,4-cyclic diphosphate + CMP. Its pathway is isoprenoid biosynthesis; isopentenyl diphosphate biosynthesis via DXP pathway; isopentenyl diphosphate from 1-deoxy-D-xylulose 5-phosphate: step 2/6. The protein operates within isoprenoid biosynthesis; isopentenyl diphosphate biosynthesis via DXP pathway; isopentenyl diphosphate from 1-deoxy-D-xylulose 5-phosphate: step 4/6. Bifunctional enzyme that catalyzes the formation of 4-diphosphocytidyl-2-C-methyl-D-erythritol from CTP and 2-C-methyl-D-erythritol 4-phosphate (MEP) (IspD), and catalyzes the conversion of 4-diphosphocytidyl-2-C-methyl-D-erythritol 2-phosphate (CDP-ME2P) to 2-C-methyl-D-erythritol 2,4-cyclodiphosphate (ME-CPP) with a corresponding release of cytidine 5-monophosphate (CMP) (IspF). The protein is Bifunctional enzyme IspD/IspF of Rhodopseudomonas palustris (strain BisB18).